The sequence spans 415 residues: Carboxypeptidase G2 (415 aa).

The first 22 residues, 1–22 (MRPSIHRTAIAAVLATAFVAGT), serve as a signal peptide directing secretion. H112 serves as a coordination point for Zn(2+). Residue D114 is part of the active site. Residue D141 participates in Zn(2+) binding. E175 (proton acceptor) is an active-site residue. Zn(2+) is bound by residues E176, E200, and H385.

Belongs to the peptidase M20A family. In terms of assembly, homodimer. Zn(2+) is required as a cofactor.

The enzyme catalyses Release of C-terminal glutamate residues from a wide range of N-acylating moieties, including peptidyl, aminoacyl, benzoyl, benzyloxycarbonyl, folyl and pteroyl groups.. Catalyzes the hydrolysis of reduced and non-reduced folates to pteroates and L-glutamate. This enzyme has a broad specificity. The chain is Carboxypeptidase G2 (cpg2) from Pseudomonas sp. (strain RS-16).